Reading from the N-terminus, the 469-residue chain is Probable Xaa-Pro aminopeptidase AN0832 (469 aa).

The Mn(2+) site is built by Asp260, Asp271, Glu398, and Glu437.

The protein belongs to the peptidase M24B family. Mn(2+) serves as cofactor.

It carries out the reaction Release of any N-terminal amino acid, including proline, that is linked to proline, even from a dipeptide or tripeptide.. Its function is as follows. Catalyzes the removal of a penultimate prolyl residue from the N-termini of peptides. This Emericella nidulans (strain FGSC A4 / ATCC 38163 / CBS 112.46 / NRRL 194 / M139) (Aspergillus nidulans) protein is Probable Xaa-Pro aminopeptidase AN0832.